The chain runs to 411 residues: MSEIKQQDNQVFEAITKEFERQDHHIELIASENFVSKAVMEAQGSVLTNKYAEGYPHRRYYGGCEFVDIVEDLARDRIKELFGAEHVNVQPHSGSQANMAVYRVALKPGDTVLGMNLSHGGHLTHGSSVNFSGVDYNFVAYGVDKETEKIDYDVVRELAREHKPALIIAGASAYSRIIDFEEFKAIADEVGAKLMVDMAHIAGLVAAGLHPNPVPHADFVTTTTHKTLRGPRGGMIICKEEYAKAIDKMIFPGIQGGPLMHVIAAKAVAFGEALTADFKAYQQQVVLNAKTLADALTEKGLRIVSGGTDNHVMSIDVTSFNITGKVAERALDDVGITTNKNTIPFDKESPFVTSGIRIGTPAVTTRGFNEEDMKEIASIIADVLAHPEDENVKHDAKVRVRAITEKYPLYK.

Residues Leu-117 and 121–123 (GHL) contribute to the (6S)-5,6,7,8-tetrahydrofolate site. Residue Lys-226 is modified to N6-(pyridoxal phosphate)lysine. (6S)-5,6,7,8-tetrahydrofolate-binding positions include Glu-241 and 349 to 351 (SPF).

This sequence belongs to the SHMT family. As to quaternary structure, homodimer. Pyridoxal 5'-phosphate serves as cofactor.

It is found in the cytoplasm. It catalyses the reaction (6R)-5,10-methylene-5,6,7,8-tetrahydrofolate + glycine + H2O = (6S)-5,6,7,8-tetrahydrofolate + L-serine. It participates in one-carbon metabolism; tetrahydrofolate interconversion. It functions in the pathway amino-acid biosynthesis; glycine biosynthesis; glycine from L-serine: step 1/1. Its function is as follows. Catalyzes the reversible interconversion of serine and glycine with tetrahydrofolate (THF) serving as the one-carbon carrier. This reaction serves as the major source of one-carbon groups required for the biosynthesis of purines, thymidylate, methionine, and other important biomolecules. Also exhibits THF-independent aldolase activity toward beta-hydroxyamino acids, producing glycine and aldehydes, via a retro-aldol mechanism. This Macrococcus caseolyticus (strain JCSC5402) (Macrococcoides caseolyticum) protein is Serine hydroxymethyltransferase.